The chain runs to 232 residues: Thiamine import ATP-binding protein ThiQ (232 aa).

The ABC transporter domain occupies 2-230 (LKLTDITWLY…KASASALLGI (229 aa)). 32-39 (GPSGAGKS) contacts ATP.

The protein belongs to the ABC transporter superfamily. Thiamine importer (TC 3.A.1.19.1) family. In terms of assembly, the complex is composed of two ATP-binding proteins (ThiQ), two transmembrane proteins (ThiP) and a solute-binding protein (ThiB).

It localises to the cell inner membrane. It carries out the reaction thiamine(out) + ATP + H2O = thiamine(in) + ADP + phosphate + H(+). In terms of biological role, part of the ABC transporter complex ThiBPQ involved in thiamine import. Responsible for energy coupling to the transport system. The polypeptide is Thiamine import ATP-binding protein ThiQ (Shigella sonnei (strain Ss046)).